Consider the following 372-residue polypeptide: Protein L-Myc-1a (372 aa).

2 disordered regions span residues 172–226 and 243–306; these read KVAA…ADPF and NYAA…DDLR. The span at 187–197 shows a compositional bias: acidic residues; sequence SDDDEDDDEID. Positions 269-284 are enriched in low complexity; it reads ESSSAPSSPLSSPATS. Positions 289 to 341 constitute a bHLH domain; that stretch reads STEQRRNFLERKRRDDLRSRFQALREEIPGLSGSSKTSKVAILTQATDYLLQL. Residues 290-306 are compositionally biased toward basic and acidic residues; that stretch reads TEQRRNFLERKRRDDLR. Residues 341–369 are leucine-zipper; sequence LHSSQRRQAQEKRKLKAKQQQLLRRISAL.

Efficient DNA binding requires dimerization with another bHLH protein. Binds DNA as a heterodimer with max. As to expression, uterus.

It localises to the nucleus. This Danio rerio (Zebrafish) protein is Protein L-Myc-1a.